The following is a 354-amino-acid chain: UDP-3-O-acylglucosamine N-acyltransferase (354 aa).

Residue histidine 245 is the Proton acceptor of the active site.

This sequence belongs to the transferase hexapeptide repeat family. LpxD subfamily. As to quaternary structure, homotrimer.

The catalysed reaction is a UDP-3-O-[(3R)-3-hydroxyacyl]-alpha-D-glucosamine + a (3R)-hydroxyacyl-[ACP] = a UDP-2-N,3-O-bis[(3R)-3-hydroxyacyl]-alpha-D-glucosamine + holo-[ACP] + H(+). It participates in bacterial outer membrane biogenesis; LPS lipid A biosynthesis. Functionally, catalyzes the N-acylation of UDP-3-O-acylglucosamine using 3-hydroxyacyl-ACP as the acyl donor. Is involved in the biosynthesis of lipid A, a phosphorylated glycolipid that anchors the lipopolysaccharide to the outer membrane of the cell. The polypeptide is UDP-3-O-acylglucosamine N-acyltransferase (Anaeromyxobacter dehalogenans (strain 2CP-1 / ATCC BAA-258)).